Consider the following 467-residue polypeptide: MSIGNIVQCIGAVVDIEFPRDAMPKVYDALVLEEGNDKSFAEKGLTFEVQQQLGDGVVRTIALGSSDGLRRGMSVMSTGAPISVPVGHGTLGRIMDVLGRPIDEAGPIEADEKRAIHQKAPKFDELSPSVDLLETGIKVIDLVCPFAKGGKVGLFGGAGVGKTVNMMELINNIAKQHSGLSVFAGVGERTREGNDFYHEMKDSNVLDKVAMVFGQMNEPPGNRLRVALTGLTMAERFRDEGRDILFFVDNIYRYTLAGTEVSALLGRMPSAVGYQPTLAEEMGKLQERITSTKTGSITSIQAVYVPADDLTDPSPATTFLHLDSTVVLSRDIAALGIYPAVDPLDSTSRQLDPQVVGTEHYEVARRVQQTLQRYKELRDIIAILGMDELSPEDKLAVSRARKIQRFLSQPFHVAEVFTGSPGKYVPLKETIRGFKMLVDGECDHLPEQAFYMVGSIDEAFEKAKKLQ.

156-163 is an ATP binding site; the sequence is GGAGVGKT.

The protein belongs to the ATPase alpha/beta chains family. F-type ATPases have 2 components, CF(1) - the catalytic core - and CF(0) - the membrane proton channel. CF(1) has five subunits: alpha(3), beta(3), gamma(1), delta(1), epsilon(1). CF(0) has three main subunits: a(1), b(2) and c(9-12). The alpha and beta chains form an alternating ring which encloses part of the gamma chain. CF(1) is attached to CF(0) by a central stalk formed by the gamma and epsilon chains, while a peripheral stalk is formed by the delta and b chains.

It localises to the cell inner membrane. It carries out the reaction ATP + H2O + 4 H(+)(in) = ADP + phosphate + 5 H(+)(out). Produces ATP from ADP in the presence of a proton gradient across the membrane. The catalytic sites are hosted primarily by the beta subunits. The polypeptide is ATP synthase subunit beta (Cupriavidus metallidurans (strain ATCC 43123 / DSM 2839 / NBRC 102507 / CH34) (Ralstonia metallidurans)).